We begin with the raw amino-acid sequence, 400 residues long: MLKVEMLSTGDEVLHGQIVDTNAAWLADFFFHQGLPLSRRNTVGDNLDDLVTILRERSQHADVLIVNGGLGPTSDDLSALAAATAKGKGLVLHEAWLKEMERYFHERGRVMAPSNRKQAELPASAEFINNPVGTACGFAVQLNRCLMFFTPGVPSEFKVMVEHEILPRLRERFSLPQPPVCLRLTTFGRSESDLAQSLDTLQLPPGVTMGYRSSMPIIELKLTGPASEQQAMEKLWLDVKRVAGQSVIFEGTEGLPAQISRELQNRQFSLTLSEQFTGGLLALQLSRAGAPLLACEVVPSQEETLAQTAHWITERRANHFAGLALAVSGFENEHLNFALATPDGTFALRVRFSTTRYSLAIRQEVCAMMALNMLRRWLNGQDIASEHGWIEVVESMTLSV.

This sequence belongs to the CinA family.

This chain is CinA-like protein, found in Escherichia coli O9:H4 (strain HS).